A 432-amino-acid chain; its full sequence is Adenylosuccinate synthetase (432 aa).

GTP-binding positions include Gly-13–Lys-19 and Gly-41–Thr-43. Asp-14 acts as the Proton acceptor in catalysis. Residues Asp-14 and Gly-41 each coordinate Mg(2+). Residues Asp-14–Lys-17, Asn-39–His-42, Thr-130, Arg-144, Gln-225, Thr-240, and Arg-304 contribute to the IMP site. His-42 acts as the Proton donor in catalysis. Substrate is bound at residue Ala-300–Arg-306. GTP is bound by residues Arg-306, Lys-332 to Asp-334, and Ser-415 to Gly-417.

Belongs to the adenylosuccinate synthetase family. In terms of assembly, homodimer. The cofactor is Mg(2+).

Its subcellular location is the cytoplasm. It catalyses the reaction IMP + L-aspartate + GTP = N(6)-(1,2-dicarboxyethyl)-AMP + GDP + phosphate + 2 H(+). Its pathway is purine metabolism; AMP biosynthesis via de novo pathway; AMP from IMP: step 1/2. Its function is as follows. Plays an important role in the de novo pathway of purine nucleotide biosynthesis. Catalyzes the first committed step in the biosynthesis of AMP from IMP. In Erwinia tasmaniensis (strain DSM 17950 / CFBP 7177 / CIP 109463 / NCPPB 4357 / Et1/99), this protein is Adenylosuccinate synthetase.